A 512-amino-acid polypeptide reads, in one-letter code: Cytochrome P450 77A4 (512 aa).

The helical transmembrane segment at 9-29 threads the bilayer; it reads PTSLDFTFFAIIISGFVFIIT. A heme-binding site is contributed by Cys-456.

The protein belongs to the cytochrome P450 family. Heme is required as a cofactor.

It localises to the membrane. In terms of biological role, catalyzes the epoxidation of physiological unsaturated fatty acids in vitro. Can use laurate, oleate, linoleate, linolenate and vernolate as substrate. This chain is Cytochrome P450 77A4 (CYP77A4), found in Arabidopsis thaliana (Mouse-ear cress).